The primary structure comprises 373 residues: Mitochondrial fission regulator 2 (373 aa).

Position 136 is a phosphoserine (Ser-136). Residues 151 to 179 (VSEAAIKKIAALEDELTSLRAQIAAIVAM) are a coiled coil. Disordered regions lie at residues 189–331 (GFIS…WDPV) and 346–373 (DDSF…GSRF). A compositionally biased stretch (pro residues) spans 224-239 (SPPPLPPPPPPLPPPQ). Basic and acidic residues-rich tracts occupy residues 275-287 (KKTD…ESQR) and 297-310 (VLKD…RPVE). Residues Ser-312 and Ser-348 each carry the phosphoserine modification. Positions 354-373 (RSWQGSPFSSPETSRNGSRF) are enriched in polar residues.

The protein belongs to the MTFR1 family.

Its subcellular location is the mitochondrion. May play a role in mitochondrial aerobic respiration essentially in the testis. Can also promote mitochondrial fission. The protein is Mitochondrial fission regulator 2 (Mtfr2) of Rattus norvegicus (Rat).